The primary structure comprises 193 residues: Probable GTP-binding protein EngB (193 aa).

The EngB-type G domain maps to 22–193 (ALPEFALAGR…EAWAALERFL (172 aa)). Residues 30–37 (GRSNVGKS), 57–61 (GKTQT), 75–78 (DVPG), 142–145 (TKAD), and 174–176 (FSA) contribute to the GTP site. The Mg(2+) site is built by Ser37 and Thr59.

It belongs to the TRAFAC class TrmE-Era-EngA-EngB-Septin-like GTPase superfamily. EngB GTPase family. Mg(2+) is required as a cofactor.

Functionally, necessary for normal cell division and for the maintenance of normal septation. The polypeptide is Probable GTP-binding protein EngB (Geobacillus sp. (strain WCH70)).